Consider the following 315-residue polypeptide: Ornithine carbamoyltransferase, anabolic (315 aa).

Carbamoyl phosphate-binding positions include S57–T60, Q84, R108, and H135–Q138. L-ornithine is bound by residues N166, D230, and S234 to M235. Residues C270–L271 and R298 each bind carbamoyl phosphate.

Belongs to the aspartate/ornithine carbamoyltransferase superfamily. OTCase family. In terms of assembly, homododecamer (tetramer of trimers).

It localises to the cytoplasm. It catalyses the reaction carbamoyl phosphate + L-ornithine = L-citrulline + phosphate + H(+). Its pathway is amino-acid biosynthesis; L-arginine biosynthesis; L-arginine from L-ornithine and carbamoyl phosphate: step 1/3. Inhibited by the bisubstrate delta-N-phosphonoacetyl-L-ornithine (PALO). Reversibly catalyzes the transfer of the carbamoyl group from carbamoyl phosphate (CP) to the N(epsilon) atom of ornithine (ORN) to produce L-citrulline, which is a substrate for argininosuccinate synthetase, the enzyme involved in the final step in arginine biosynthesis. This Pyrococcus furiosus (strain ATCC 43587 / DSM 3638 / JCM 8422 / Vc1) protein is Ornithine carbamoyltransferase, anabolic.